An 83-amino-acid polypeptide reads, in one-letter code: Three-finger toxin MALT0052C (83 aa).

A signal peptide spans 1 to 21 (MKTLLLTLVVVTIVCLDFGHT). 4 cysteine pairs are disulfide-bonded: C24/C45, C38/C62, C64/C75, and C76/C81.

The protein belongs to the three-finger toxin family. Short-chain subfamily. Type I alpha-neurotoxin sub-subfamily. As to expression, expressed by the venom gland.

Its subcellular location is the secreted. Its function is as follows. Binds to muscle nicotinic acetylcholine receptor (nAChR) and inhibit acetylcholine from binding to the receptor, thereby impairing neuromuscular transmission. The sequence is that of Three-finger toxin MALT0052C from Micrurus altirostris (Uruguayan coral snake).